Consider the following 283-residue polypeptide: Formamidopyrimidine-DNA glycosylase (283 aa).

The active-site Schiff-base intermediate with DNA is Pro2. Glu3 serves as the catalytic Proton donor. Catalysis depends on Lys58, which acts as the Proton donor; for beta-elimination activity. DNA contacts are provided by His100, Arg119, and Arg162. An FPG-type zinc finger spans residues 247–283 (RVYGREGLPCVTPGCSGTVGRIVQSGRSSFHCPLCQR). Arg273 serves as the catalytic Proton donor; for delta-elimination activity.

The protein belongs to the FPG family. As to quaternary structure, monomer. Zn(2+) is required as a cofactor.

It carries out the reaction Hydrolysis of DNA containing ring-opened 7-methylguanine residues, releasing 2,6-diamino-4-hydroxy-5-(N-methyl)formamidopyrimidine.. The catalysed reaction is 2'-deoxyribonucleotide-(2'-deoxyribose 5'-phosphate)-2'-deoxyribonucleotide-DNA = a 3'-end 2'-deoxyribonucleotide-(2,3-dehydro-2,3-deoxyribose 5'-phosphate)-DNA + a 5'-end 5'-phospho-2'-deoxyribonucleoside-DNA + H(+). Involved in base excision repair of DNA damaged by oxidation or by mutagenic agents. Acts as a DNA glycosylase that recognizes and removes damaged bases. Has a preference for oxidized purines, such as 7,8-dihydro-8-oxoguanine (8-oxoG). Has AP (apurinic/apyrimidinic) lyase activity and introduces nicks in the DNA strand. Cleaves the DNA backbone by beta-delta elimination to generate a single-strand break at the site of the removed base with both 3'- and 5'-phosphates. The sequence is that of Formamidopyrimidine-DNA glycosylase from Cereibacter sphaeroides (strain KD131 / KCTC 12085) (Rhodobacter sphaeroides).